The sequence spans 640 residues: Calpain-5 (640 aa).

In terms of domain architecture, Calpain catalytic spans 26–343 (LFEDPHFPAS…FTDIIKCRLI (318 aa)). Active-site residues include Cys-81, His-252, and Asn-284. Positions 344–496 (NTSYLSIHKT…VFTDVPSNCR (153 aa)) are domain III. A C2 domain is found at 499–617 (RLDEPPRTCW…HSLHLQDRSG (119 aa)).

Belongs to the peptidase C2 family.

Functionally, calcium-regulated non-lysosomal thiol-protease. This Rattus norvegicus (Rat) protein is Calpain-5 (Capn5).